The chain runs to 588 residues: Complement component C8 beta chain (588 aa).

The N-terminal stretch at 1 to 30 (MFRVAIPRSALNLHSCLLHVTLSLVLISKA) is a signal peptide. A propeptide spanning residues 31-46 (AITTAGNEDSDVREAR) is cleaved from the precursor. The TSP type-1 1 domain maps to 58-113 (DCVISDWSAWSRCDTCQKKRYRYAKLDQPSQFGGEPCHFHDMEDEACDVPDRYTCD). Cystine bridges form between cysteine 59/cysteine 94, cysteine 70/cysteine 104, cysteine 73/cysteine 112, cysteine 118/cysteine 129, cysteine 123/cysteine 142, cysteine 136/cysteine 151, and cysteine 158/cysteine 196. Tryptophan 64 and tryptophan 67 each carry a C-linked (Man) tryptophan glycan. The LDL-receptor class A domain maps to 115–152 (IPLCEGFLCTQTGRCIHRTLQCNGEDDCGDMSDEVGCK). The Ca(2+) site is built by leucine 134, asparagine 137, glutamate 139, aspartate 141, aspartate 147, and glutamate 148. Positions 154–500 (VPKPCRQEAE…EYLAESSSCR (347 aa)) constitute an MACPF domain. A run of 4 beta stranded transmembrane segments spans residues 248 to 255 (TIVSIGFA), 258 to 265 (GIAEFGFN), 375 to 382 (TQAGLKIG), and 388 to 395 (VYVSAGIE). Disulfide bonds link cysteine 374-cysteine 399, cysteine 499-cysteine 547, cysteine 501-cysteine 517, cysteine 504-cysteine 519, and cysteine 521-cysteine 530. The EGF-like domain occupies 501–531 (CAPCHNNGVAVLRGTRCDCVCPTGYTGRGCE). Residues 542-588 (DGSWSCWGAWSSCSGRKMSRSRQCNNPVPSDGGLACRGLQQESTDCF) form the TSP type-1 2 domain. C-linked (Man) tryptophan glycosylation is found at tryptophan 548 and tryptophan 551. Cysteine 554 and cysteine 587 form a disulfide bridge.

Belongs to the complement C6/C7/C8/C9 family. As to quaternary structure, heterotrimer of 3 chains: alpha (C8A), beta (C8B) and gamma (C8G); the alpha and gamma chains are disulfide bonded. Component of the membrane attack complex (MAC), composed of complement C5b, C6, C7, C8A, C8B, C8G and multiple copies of the pore-forming subunit C9.

It localises to the secreted. It is found in the target cell membrane. Component of the membrane attack complex (MAC), a multiprotein complex activated by the complement cascade, which inserts into a target cell membrane and forms a pore, leading to target cell membrane rupture and cell lysis. The MAC is initiated by proteolytic cleavage of C5 into complement C5b in response to the classical, alternative, lectin and GZMK complement pathways. The complement pathways consist in a cascade of proteins that leads to phagocytosis and breakdown of pathogens and signaling that strengthens the adaptive immune system. C8B, together with C8A and C8G, inserts into the target membrane, but does not form pores by itself. During MAC assembly, associates with C5b, C6 and C7 to form the C5b8 intermediate complex that inserts into the target membrane and traverses the bilayer increasing membrane rigidity. The chain is Complement component C8 beta chain (c8b) from Paralichthys olivaceus (Bastard halibut).